The chain runs to 427 residues: Septin-8 (427 aa).

A Septin-type G domain is found at 39–305; that stretch reads QGFCFNILCV…ELYRRCKLEE (267 aa). A G1 motif region spans residues 49 to 56; the sequence is GETGIGKS. GTP-binding positions include 49-56, Gly104, 185-193, Gly239, and Arg254; these read GETGIGKS and KADTISKSE. The G3 motif stretch occupies residues 101–104; sequence DTVG. Residues 184–187 form a G4 motif region; sequence AKAD. A coiled-coil region spans residues 321–409; it reads QETYEAKRKE…KAAMEALQSQ (89 aa). Residues 373–427 form a disordered region; it reads RVHQEESKKVEDKRRDLEEEMNSFNRRKAAMEALQSQSFQATSQQPLKKDKDRKN. Basic and acidic residues predominate over residues 374–389; sequence VHQEESKKVEDKRRDL. Polar residues predominate over residues 406-418; the sequence is LQSQSFQATSQQP.

The protein belongs to the TRAFAC class TrmE-Era-EngA-EngB-Septin-like GTPase superfamily. Septin GTPase family.

The protein resides in the cytoplasm. It is found in the cytoskeleton. The protein localises to the synapse. Its subcellular location is the cell projection. It localises to the axon. The protein resides in the cytoplasmic vesicle. It is found in the secretory vesicle. The protein localises to the synaptic vesicle membrane. Its subcellular location is the presynapse. The polypeptide is Septin-8 (Xenopus tropicalis (Western clawed frog)).